Here is a 246-residue protein sequence, read N- to C-terminus: tRNA (guanine-N(1)-)-methyltransferase (246 aa).

S-adenosyl-L-methionine-binding positions include Gly-114 and 134 to 139 (IGDYIL).

Belongs to the RNA methyltransferase TrmD family. Homodimer.

It localises to the cytoplasm. The enzyme catalyses guanosine(37) in tRNA + S-adenosyl-L-methionine = N(1)-methylguanosine(37) in tRNA + S-adenosyl-L-homocysteine + H(+). Its function is as follows. Specifically methylates guanosine-37 in various tRNAs. The polypeptide is tRNA (guanine-N(1)-)-methyltransferase (Coxiella burnetii (strain CbuK_Q154) (Coxiella burnetii (strain Q154))).